The sequence spans 248 residues: FCS-Like Zinc finger 14 (248 aa).

Residues 85–94 (VCRSEPNQPG) show a composition bias toward polar residues. The tract at residues 85-108 (VCRSEPNQPGRSDPVQFMSHGGST) is disordered. An FLZ-type zinc finger spans residues 181–224 (GFLNSCYLCRKKLHGQDIFIYRGEKAFCSTECRSSHIANDERKE).

The protein belongs to the FLZ family. Interacts with KIN10 and KIN11 via its FLZ-type zinc finger domain. Interacts with KINB1, KINB2 and KINB3 via its N-terminal part.

It localises to the cytoplasm. The protein localises to the nucleus. Its function is as follows. May act as an adapter to facilitate the interaction of SnRK1 complex with effector proteins, conferring tissue- and stimulus-type specific differences in the SnRK1 regulation pathway. In Arabidopsis thaliana (Mouse-ear cress), this protein is FCS-Like Zinc finger 14.